The following is a 157-amino-acid chain: MRCSNCQNKNTKVLDSRPIEEGRAIRRRRECERCGFRFTTFERIEEVPLIVVKKDGVRQEFSREKLMRGLIRACEKRPVALETIESIALEVEKKLRNAGNPEVSSNSIGEMVMELLSKVDEVSYVRFASVYRQFKDITVFLDELKDIINTDKSMKDK.

The segment at 3 to 34 is a zinc-finger region; it reads CSNCQNKNTKVLDSRPIEEGRAIRRRRECERC. The ATP-cone domain maps to 49 to 139; it reads LIVVKKDGVR…VYRQFKDITV (91 aa).

Belongs to the NrdR family. It depends on Zn(2+) as a cofactor.

Its function is as follows. Negatively regulates transcription of bacterial ribonucleotide reductase nrd genes and operons by binding to NrdR-boxes. This is Transcriptional repressor NrdR from Oceanobacillus iheyensis (strain DSM 14371 / CIP 107618 / JCM 11309 / KCTC 3954 / HTE831).